The following is an 89-amino-acid chain: Small ribosomal subunit protein uS15 (89 aa).

This sequence belongs to the universal ribosomal protein uS15 family. In terms of assembly, part of the 30S ribosomal subunit. Forms a bridge to the 50S subunit in the 70S ribosome, contacting the 23S rRNA.

In terms of biological role, one of the primary rRNA binding proteins, it binds directly to 16S rRNA where it helps nucleate assembly of the platform of the 30S subunit by binding and bridging several RNA helices of the 16S rRNA. Its function is as follows. Forms an intersubunit bridge (bridge B4) with the 23S rRNA of the 50S subunit in the ribosome. This chain is Small ribosomal subunit protein uS15, found in Mesorhizobium japonicum (strain LMG 29417 / CECT 9101 / MAFF 303099) (Mesorhizobium loti (strain MAFF 303099)).